The chain runs to 103 residues: Phosphoribosyl-ATP pyrophosphatase (103 aa).

This sequence belongs to the PRA-PH family.

Its subcellular location is the cytoplasm. It catalyses the reaction 1-(5-phospho-beta-D-ribosyl)-ATP + H2O = 1-(5-phospho-beta-D-ribosyl)-5'-AMP + diphosphate + H(+). It participates in amino-acid biosynthesis; L-histidine biosynthesis; L-histidine from 5-phospho-alpha-D-ribose 1-diphosphate: step 2/9. In Cereibacter sphaeroides (strain ATCC 17025 / ATH 2.4.3) (Rhodobacter sphaeroides), this protein is Phosphoribosyl-ATP pyrophosphatase.